The primary structure comprises 625 residues: Alpha-1,3-galactosidase A (625 aa).

Residues 1–32 (MAHGCSGGAMSRFVFLGVALALLGGATSPAAA) form the signal peptide. PbH1 repeat units follow at residues 342–364 (KGKVSITRSLFDGPHDDPINIHG), 460–482 (TPSVVISGNVFRNVPTRGILVTT), 483–505 (RKPVLITGNRFDGMSMASIYVSA), 516–537 (VADLTIRGNSFTRPSGPVIFVE), and 573–611 (VGGFAFTGNTVRRLDGADHPPYTSPLFVFHGSSGIRIAR).

The protein belongs to the glycosyl hydrolase 110 family. A subfamily.

The catalysed reaction is Hydrolysis of terminal, non-reducing branched (1-&gt;3)-alpha-D-galactosidic residues, producing free D-galactose.. It carries out the reaction Hydrolysis of terminal, non-reducing alpha-D-galactose residues in alpha-D-galactosides, including galactose oligosaccharides, galactomannans and galactolipids.. In terms of biological role, alpha-galactosidase that specifically removes branched alpha-1,3-linked galactose residues present in blood group B antigens. Has no activity toward linear alpha-1,3-linked galactose residues. This is Alpha-1,3-galactosidase A (glaA) from Streptomyces avermitilis (strain ATCC 31267 / DSM 46492 / JCM 5070 / NBRC 14893 / NCIMB 12804 / NRRL 8165 / MA-4680).